Reading from the N-terminus, the 180-residue chain is Putative adenylate kinase (180 aa).

Residues Gly10, Gly12, Lys13, Thr14, and Thr15 each contribute to the ATP site. The segment at 30–50 (NLRDFALEKGCGREVDGEVEV) is NMP. The interval 99–109 (ERGYSKEKIGE) is LID. The ATP site is built by Arg100 and Lys138.

Belongs to the adenylate kinase family. AK6 subfamily. In terms of assembly, interacts with uS11. Not a structural component of 40S pre-ribosomes, but transiently interacts with them by binding to uS11.

It carries out the reaction AMP + ATP = 2 ADP. The enzyme catalyses ATP + H2O = ADP + phosphate + H(+). In terms of biological role, broad-specificity nucleoside monophosphate (NMP) kinase that catalyzes the reversible transfer of the terminal phosphate group between nucleoside triphosphates and monophosphates. Also has ATPase activity. Involved in the late maturation steps of the 30S ribosomal particles, specifically 16S rRNA maturation. While NMP activity is not required for ribosome maturation, ATPase activity is. Associates transiently with small ribosomal subunit protein uS11. ATP hydrolysis breaks the interaction with uS11. May temporarily remove uS11 from the ribosome to enable a conformational change of the ribosomal RNA that is needed for the final maturation step of the small ribosomal subunit. The chain is Putative adenylate kinase from Pyrococcus abyssi (strain GE5 / Orsay).